A 115-amino-acid chain; its full sequence is DNA-directed RNA polymerase II subunit RPB11-b2 (115 aa).

This sequence belongs to the archaeal Rpo11/eukaryotic RPB11/RPC19 RNA polymerase subunit family. In terms of assembly, component of the RNA polymerase II (Pol II) complex consisting of 12 subunits.

The protein localises to the nucleus. In terms of biological role, DNA-dependent RNA polymerase catalyzes the transcription of DNA into RNA using the four ribonucleoside triphosphates as substrates. Component of RNA polymerase II which synthesizes mRNA precursors and many functional non-coding RNAs. Pol II is the central component of the basal RNA polymerase II transcription machinery. It is composed of mobile elements that move relative to each other. RPB11 is part of the core element with the central large cleft. The sequence is that of DNA-directed RNA polymerase II subunit RPB11-b2 (POLR2J3) from Homo sapiens (Human).